Reading from the N-terminus, the 311-residue chain is tRNA pseudouridine synthase B (311 aa).

Histidine 43 is a binding site for substrate. The active-site Nucleophile is aspartate 48. Substrate is bound by residues tyrosine 76, tyrosine 179, and leucine 200.

This sequence belongs to the pseudouridine synthase TruB family. Type 1 subfamily.

The enzyme catalyses uridine(55) in tRNA = pseudouridine(55) in tRNA. Its function is as follows. Responsible for synthesis of pseudouridine from uracil-55 in the psi GC loop of transfer RNAs. In Sodalis glossinidius (strain morsitans), this protein is tRNA pseudouridine synthase B.